The sequence spans 136 residues: Protein PsiE homolog (136 aa).

4 consecutive transmembrane segments (helical) span residues 15–35 (AMQA…VVFL), 58–78 (VEGL…VKYF), 82–102 (FHFP…RLII), and 108–128 (PLAV…LWLC).

The protein belongs to the PsiE family.

It is found in the cell inner membrane. This is Protein PsiE homolog from Klebsiella pneumoniae subsp. pneumoniae (strain ATCC 700721 / MGH 78578).